The following is a 639-amino-acid chain: Testicular spindle-associated protein SHCBP1L (639 aa).

Disordered regions lie at residues 1-25 (MESD…EQTV) and 48-75 (VASP…ETCD). O-acetylserine is present on Ser3. A phosphoserine mark is found at Ser8, Ser19, and Ser50. The segment covering 54 to 63 (VKGKAARRRL) has biased composition (basic residues). Residues 285–312 (IAQRFKKTLEKYKNKRVELIEYQSNIKE) are a coiled coil. PbH1 repeat units lie at residues 479-500 (SGHL…CVLT), 501-523 (GASL…ELYP), 524-557 (GSIA…NMKV), and 560-582 (APKL…SILQ). Lys556 carries the post-translational modification N6-acetyllysine. Lys631 is subject to N6-acetyllysine.

In terms of assembly, interacts with HSPA2; this interaction may promote the recruitment of HSPA2 to the spindle. Expressed in pachytene spermatocytes and elongating spermatids inside the seminiferous tubules. Not detected in ovary (at protein level). Testis-specific.

The protein resides in the cytoplasm. The protein localises to the cytoskeleton. It is found in the spindle. Testis-specific spindle-associated factor that plays a role in spermatogenesis. In association with HSPA2, participates in the maintenance of spindle integrity during meiosis in male germ cells. This Mus musculus (Mouse) protein is Testicular spindle-associated protein SHCBP1L.